We begin with the raw amino-acid sequence, 124 residues long: Small ribosomal subunit protein uS13 (124 aa).

Residues 94 to 124 (GLPLRGQRTKNNSRTRKGKRKTVANKKKATK) form a disordered region. Basic residues predominate over residues 100-124 (QRTKNNSRTRKGKRKTVANKKKATK).

The protein belongs to the universal ribosomal protein uS13 family. In terms of assembly, part of the 30S ribosomal subunit. Forms a loose heterodimer with protein S19. Forms two bridges to the 50S subunit in the 70S ribosome.

Its function is as follows. Located at the top of the head of the 30S subunit, it contacts several helices of the 16S rRNA. In the 70S ribosome it contacts the 23S rRNA (bridge B1a) and protein L5 of the 50S subunit (bridge B1b), connecting the 2 subunits; these bridges are implicated in subunit movement. Contacts the tRNAs in the A and P-sites. In Flavobacterium johnsoniae (strain ATCC 17061 / DSM 2064 / JCM 8514 / BCRC 14874 / CCUG 350202 / NBRC 14942 / NCIMB 11054 / UW101) (Cytophaga johnsonae), this protein is Small ribosomal subunit protein uS13.